Here is a 200-residue protein sequence, read N- to C-terminus: ATP synthase subunit s, mitochondrial (200 aa).

The N-terminal 25 residues, 1-25, are a transit peptide targeting the mitochondrion; sequence MMLFGKVSQQLCGIKKLPWSCDSRY. Residues 1–61 are N-terminal domain; sequence MMLFGKVSQQ…SEWLLRCGAM (61 aa). Residue glycine 59 participates in Mg(2+) binding. LRR repeat units follow at residues 62–87, 88–116, 117–141, and 142–173; these read VRYH…KYKI, QAID…KIRL, CKCH…KSIL, and EMEI…LSDL. A Mg(2+)-binding site is contributed by threonine 93.

It belongs to the ATP synthase subunit s family. In terms of assembly, homotetramer. Associates with ATP synthase.

The protein localises to the mitochondrion. It localises to the mitochondrion inner membrane. In terms of biological role, involved in regulation of mitochondrial membrane ATP synthase. Necessary for H(+) conduction of ATP synthase. Facilitates energy-driven catalysis of ATP synthesis by blocking a proton leak through an alternative proton exit pathway. The sequence is that of ATP synthase subunit s, mitochondrial (DMAC2L) from Macaca fascicularis (Crab-eating macaque).